The sequence spans 542 residues: Chloride channel CLIC-like protein 1 (542 aa).

An N-terminal signal peptide occupies residues 1–18 (MLYSLLLCECLWLITAYA). Residues 19 to 184 (HDDEWIDPTD…EEFFGVDPYN (166 aa)) lie on the Lumenal side of the membrane. A helical transmembrane segment spans residues 185-205 (VFMVLLCLLCIVALVATELWT). Over 206 to 216 (YVRWYTQLKRV) the chain is Cytoplasmic. Residues 217–237 (FFISFLISLGWNWMYLYKLAF) traverse the membrane as a helical segment. Over 238–329 (AQHQAEVAKM…GEFIKALMKE (92 aa)) the chain is Lumenal. The helical transmembrane segment at 330-350 (IPVLLHIPVLIIMALAVLSFC) threads the bilayer. Over 351–542 (YGAGKSVNML…PASTAVEVCG (192 aa)) the chain is Cytoplasmic. A disordered region spans residues 369–394 (EAPQALQAGERRRQQKIDYRPHGGAG). A compositionally biased stretch (basic and acidic residues) spans 377 to 389 (GERRRQQKIDYRP). A phosphoserine mark is found at S438 and S464. The segment at 452 to 542 (AREHPKVVPG…PASTAVEVCG (91 aa)) is disordered. Residues 480–491 (ESTPTESSTESS) show a composition bias toward low complexity. T482 bears the Phosphothreonine mark. A Phosphoserine modification is found at S532.

Belongs to the chloride channel MCLC family. As to quaternary structure, homomultimers. Interacts with mitochondrial protein PIGBOS1 (via C-terminus); the interaction occurs at the mitochondria-associated endoplasmic reticulum (ER) membrane, a zone of contact between the ER and mitochondrial membranes, but does not appear to play a role in ER-mitochondria tethering and is not affected by ER stress. Interacts with CALR.

It localises to the endoplasmic reticulum membrane. It catalyses the reaction chloride(in) = chloride(out). It carries out the reaction bromide(in) = bromide(out). The catalysed reaction is nitrate(in) = nitrate(out). The enzyme catalyses fluoride(in) = fluoride(out). Functionally, anion-selective channel with Ca(2+)-dependent and voltage-independent gating. Permeable to small monovalent anions with selectivity for bromide &gt; chloride &gt; nitrate &gt; fluoride. Operates in the endoplasmic reticulum (ER) membrane where it mediates chloride efflux to compensate for the loss of positive charges from the ER lumen upon Ca(2+) release. Contributes to the maintenance of ER Ca(2+) pools and activation of unfolded protein response to prevent accumulation of misfolded proteins in the ER lumen. Particularly involved in ER homeostasis mechanisms underlying motor neurons and retinal photoreceptors survival. The polypeptide is Chloride channel CLIC-like protein 1 (CLCC1) (Bos taurus (Bovine)).